The following is a 343-amino-acid chain: UDP-3-O-acylglucosamine N-acyltransferase 2 (343 aa).

H251 (proton acceptor) is an active-site residue.

This sequence belongs to the transferase hexapeptide repeat family. LpxD subfamily. Homotrimer.

The enzyme catalyses a UDP-3-O-[(3R)-3-hydroxyacyl]-alpha-D-glucosamine + a (3R)-hydroxyacyl-[ACP] = a UDP-2-N,3-O-bis[(3R)-3-hydroxyacyl]-alpha-D-glucosamine + holo-[ACP] + H(+). Its pathway is bacterial outer membrane biogenesis; LPS lipid A biosynthesis. Catalyzes the N-acylation of UDP-3-O-acylglucosamine using 3-hydroxyacyl-ACP as the acyl donor. Is involved in the biosynthesis of lipid A, a phosphorylated glycolipid that anchors the lipopolysaccharide to the outer membrane of the cell. The protein is UDP-3-O-acylglucosamine N-acyltransferase 2 of Legionella pneumophila (strain Paris).